A 699-amino-acid chain; its full sequence is Elongation factor G (699 aa).

The 283-residue stretch at 8-290 folds into the tr-type G domain; sequence NKYRNLGIMA…KVIELLPSPV (283 aa). Residues 17 to 24, 88 to 92, and 142 to 145 contribute to the GTP site; these read AHIDAGKT, DTPGH, and NKMD.

This sequence belongs to the TRAFAC class translation factor GTPase superfamily. Classic translation factor GTPase family. EF-G/EF-2 subfamily.

The protein resides in the cytoplasm. Catalyzes the GTP-dependent ribosomal translocation step during translation elongation. During this step, the ribosome changes from the pre-translocational (PRE) to the post-translocational (POST) state as the newly formed A-site-bound peptidyl-tRNA and P-site-bound deacylated tRNA move to the P and E sites, respectively. Catalyzes the coordinated movement of the two tRNA molecules, the mRNA and conformational changes in the ribosome. The protein is Elongation factor G of Dichelobacter nodosus (strain VCS1703A).